The following is a 4885-amino-acid chain: Centrosome-associated protein CEP530 (4885 aa).

Residues 1437 to 1528 (VAEYEAETRG…GREKDQLRSE (92 aa)) are a coiled coil.

The protein resides in the cytoplasm. The protein localises to the cytoskeleton. It localises to the microtubule organizing center. It is found in the centrosome. In terms of biological role, required for proper nuclei segregation during the cell division. Plays a role in coordination of karyokinesis and cytokinesis during the tachyzoite cell cycle. In Toxoplasma gondii (strain ATCC 50611 / Me49), this protein is Centrosome-associated protein CEP530.